A 148-amino-acid polypeptide reads, in one-letter code: MFSLQDVITTTKTTLAAMPKGYLPKWLLFISIVSVFNSIQTYVSGLELTRKVYERKPTETTHLSARTFGTWTFISCVIRFYGAMYLNEPHIFELVFMSYMVALFHFGSELLIFRTCKLGKGFMGPLVVSTTSLVWMYKQREYYTGVAW.

Residues 1–25 (MFSLQDVITTTKTTLAAMPKGYLPK) are Cytoplasmic-facing. A helical transmembrane segment spans residues 26–46 (WLLFISIVSVFNSIQTYVSGL). The Lumenal segment spans residues 47–92 (ELTRKVYERKPTETTHLSARTFGTWTFISCVIRFYGAMYLNEPHIF). A helical transmembrane segment spans residues 93–113 (ELVFMSYMVALFHFGSELLIF). Over 114-120 (RTCKLGK) the chain is Cytoplasmic. The helical transmembrane segment at 121–136 (GFMGPLVVSTTSLVWM) threads the bilayer. Topologically, residues 137-148 (YKQREYYTGVAW) are lumenal.

This sequence belongs to the ERG28 family. As to quaternary structure, heterotetramer of ERG25, ERG26, ERG27 and ERG28. ERG28 acts as a scaffold to tether ERG27 and other 4,4-demethylation-related enzymes, forming a demethylation enzyme complex, in the endoplasmic reticulum. Interacts with ERG25, ERG26 and ERG27. Also interacts with ERG1, ERG3, ERG5, ERG6 and ERG11.

It is found in the endoplasmic reticulum membrane. Its function is as follows. Part of the third module of ergosterol biosynthesis pathway that includes the late steps of the pathway. ERG28 has a role as a scaffold to help anchor the catalytic components of the C-4 demethylation complex ERG25, ERG26 and ERG27 to the endoplasmic reticulum. The third module or late pathway involves the ergosterol synthesis itself through consecutive reactions that mainly occur in the endoplasmic reticulum (ER) membrane. Firstly, the squalene synthase ERG9 catalyzes the condensation of 2 farnesyl pyrophosphate moieties to form squalene, which is the precursor of all steroids. Squalene synthase is crucial for balancing the incorporation of farnesyl diphosphate (FPP) into sterol and nonsterol isoprene synthesis. Secondly, the squalene epoxidase ERG1 catalyzes the stereospecific oxidation of squalene to (S)-2,3-epoxysqualene, which is considered to be a rate-limiting enzyme in steroid biosynthesis. Then, the lanosterol synthase ERG7 catalyzes the cyclization of (S)-2,3 oxidosqualene to lanosterol, a reaction that forms the sterol core. In the next steps, lanosterol is transformed to zymosterol through a complex process involving various demethylation, reduction and desaturation reactions. The lanosterol 14-alpha-demethylase ERG11 (also known as CYP51) catalyzes C14-demethylation of lanosterol to produce 4,4'-dimethyl cholesta-8,14,24-triene-3-beta-ol, which is critical for ergosterol biosynthesis. The C-14 reductase ERG24 reduces the C14=C15 double bond of 4,4-dimethyl-cholesta-8,14,24-trienol to produce 4,4-dimethyl-cholesta-8,24-dienol. 4,4-dimethyl-cholesta-8,24-dienol is substrate of the C-4 demethylation complex ERG25-ERG26-ERG27 in which ERG25 catalyzes the three-step monooxygenation required for the demethylation of 4,4-dimethyl and 4alpha-methylsterols, ERG26 catalyzes the oxidative decarboxylation that results in a reduction of the 3-beta-hydroxy group at the C-3 carbon to an oxo group, and ERG27 is responsible for the reduction of the keto group on the C-3. ERG28 has a role as a scaffold to help anchor ERG25, ERG26 and ERG27 to the endoplasmic reticulum and ERG29 regulates the activity of the iron-containing C4-methylsterol oxidase ERG25. Then, the sterol 24-C-methyltransferase ERG6 catalyzes the methyl transfer from S-adenosyl-methionine to the C-24 of zymosterol to form fecosterol. The C-8 sterol isomerase ERG2 catalyzes the reaction which results in unsaturation at C-7 in the B ring of sterols and thus converts fecosterol to episterol. The sterol-C5-desaturase ERG3 then catalyzes the introduction of a C-5 double bond in the B ring to produce 5-dehydroepisterol. The C-22 sterol desaturase ERG5 further converts 5-dehydroepisterol into ergosta-5,7,22,24(28)-tetraen-3beta-ol by forming the C-22(23) double bond in the sterol side chain. Finally, ergosta-5,7,22,24(28)-tetraen-3beta-ol is substrate of the C-24(28) sterol reductase ERG4 to produce ergosterol. The sequence is that of Ergosterol biosynthetic protein 28 from Saccharomyces cerevisiae (strain ATCC 204508 / S288c) (Baker's yeast).